The primary structure comprises 590 residues: UvrABC system protein C (590 aa).

Residues 15 to 92 (DLPGCYMMKD…IQKHKPYYNI (78 aa)) enclose the GIY-YIG domain. Residues 197–232 (SKIKKELEQKMETASENLEFERAAEIRDQIHYVEMT) form the UVR domain.

It belongs to the UvrC family. Interacts with UvrB in an incision complex.

It is found in the cytoplasm. In terms of biological role, the UvrABC repair system catalyzes the recognition and processing of DNA lesions. UvrC both incises the 5' and 3' sides of the lesion. The N-terminal half is responsible for the 3' incision and the C-terminal half is responsible for the 5' incision. This is UvrABC system protein C from Ligilactobacillus salivarius (strain UCC118) (Lactobacillus salivarius).